A 96-amino-acid chain; its full sequence is Maintenance of carboxysome distribution protein B (96 aa).

A compositionally biased stretch (basic and acidic residues) spans 1–18; the sequence is MTNLEDKLSASIKTENKD. Residues 1 to 96 form a disordered region; that stretch reads MTNLEDKLSA…STHPRRVWPD (96 aa). Residues 59–74 are compositionally biased toward low complexity; it reads ARATTTKPAVSKSSKP.

Monomer, associates with McdA:DNA. Interacts with shell components of the carboxysome.

Its subcellular location is the carboxysome. Functionally, mcdA and McdB together mediate carboxysome positioning on the nucleoid and to prevent their aggregation in the cell. Undergoes liquid-liquid phase separation at pH 7.0 in the presence of crowders polyethylene glycol or Ficoll. McdA is an ATPase that forms dynamic gradients on the nucleoid in response to adapter protein McdB, which associates with carboxysomes. The interplay between McdA gradients on the nucleoid and McdB-bound carboxysomes result in the equal spacing of Cbs along the cell length. Stimulates the ATPase activity of McdA, causing McdA to be released from DNA. In terms of biological role, incorrect positioning (aggregation) of carboxysomes results in reduced CO(2) fixation by encapsulated form 1 ribulose-1,5-bisphosphate carboxylase (RuBisCO, cbbL/cbbS), which leads to slower growth. The chain is Maintenance of carboxysome distribution protein B from Halothiobacillus neapolitanus (strain ATCC 23641 / c2) (Thiobacillus neapolitanus).